A 205-amino-acid polypeptide reads, in one-letter code: Holliday junction branch migration complex subunit RuvA (205 aa).

The domain I stretch occupies residues 1–64; that stretch reads MIGKLKGVVD…EDMIRLYGFR (64 aa). Positions 65–143 are domain II; that stretch reads SDAEREWFRL…AFAPVDPALV (79 aa). Residues 144-152 are flexible linker; sequence RLAGAVEAR. Positions 153–205 are domain III; the sequence is TAPQPVADAISALVNLGYPQAQASAAVAAALQSAGAEAEAKTLIRLGLRELAR.

This sequence belongs to the RuvA family. In terms of assembly, homotetramer. Forms an RuvA(8)-RuvB(12)-Holliday junction (HJ) complex. HJ DNA is sandwiched between 2 RuvA tetramers; dsDNA enters through RuvA and exits via RuvB. An RuvB hexamer assembles on each DNA strand where it exits the tetramer. Each RuvB hexamer is contacted by two RuvA subunits (via domain III) on 2 adjacent RuvB subunits; this complex drives branch migration. In the full resolvosome a probable DNA-RuvA(4)-RuvB(12)-RuvC(2) complex forms which resolves the HJ.

Its subcellular location is the cytoplasm. In terms of biological role, the RuvA-RuvB-RuvC complex processes Holliday junction (HJ) DNA during genetic recombination and DNA repair, while the RuvA-RuvB complex plays an important role in the rescue of blocked DNA replication forks via replication fork reversal (RFR). RuvA specifically binds to HJ cruciform DNA, conferring on it an open structure. The RuvB hexamer acts as an ATP-dependent pump, pulling dsDNA into and through the RuvAB complex. HJ branch migration allows RuvC to scan DNA until it finds its consensus sequence, where it cleaves and resolves the cruciform DNA. This chain is Holliday junction branch migration complex subunit RuvA, found in Methylobacterium sp. (strain 4-46).